The chain runs to 427 residues: 3-phosphoshikimate 1-carboxyvinyltransferase (427 aa).

3-phosphoshikimate contacts are provided by Lys27, Ser28, and Arg32. Lys27 serves as a coordination point for phosphoenolpyruvate. Phosphoenolpyruvate-binding residues include Gly95 and Arg123. 3-phosphoshikimate is bound by residues Ser166, Ser167, Gln168, Ser192, Asp305, and Lys332. Phosphoenolpyruvate is bound at residue Gln168. The active-site Proton acceptor is Asp305. The phosphoenolpyruvate site is built by Arg336 and Arg377.

This sequence belongs to the EPSP synthase family. As to quaternary structure, monomer.

Its subcellular location is the cytoplasm. The enzyme catalyses 3-phosphoshikimate + phosphoenolpyruvate = 5-O-(1-carboxyvinyl)-3-phosphoshikimate + phosphate. It functions in the pathway metabolic intermediate biosynthesis; chorismate biosynthesis. Catalyzes the transfer of the enolpyruvyl moiety of phosphoenolpyruvate (PEP) to the 5-hydroxyl of shikimate-3-phosphate (S3P) to produce enolpyruvyl shikimate-3-phosphate and inorganic phosphate. The protein is 3-phosphoshikimate 1-carboxyvinyltransferase of Aeropyrum pernix (strain ATCC 700893 / DSM 11879 / JCM 9820 / NBRC 100138 / K1).